The following is a 118-amino-acid chain: Large ribosomal subunit protein bL19 (118 aa).

Belongs to the bacterial ribosomal protein bL19 family.

This protein is located at the 30S-50S ribosomal subunit interface and may play a role in the structure and function of the aminoacyl-tRNA binding site. The sequence is that of Large ribosomal subunit protein bL19 from Salinibacter ruber (strain DSM 13855 / M31).